Here is a 117-residue protein sequence, read N- to C-terminus: Biofilm growth-associated repressor (117 aa).

The HTH arsR-type domain maps to 20-114 (AMEKRATEVA…ALYAIFCAPE (95 aa)). The H-T-H motif DNA-binding region spans 54-77 (VGELEAKLDIRQPTLSQQLGVLRE).

Represses an operon that comprises at least itself and blh. Binds to a palindromic AT-rich sequence spanning the -10 region of the blh promoter and blocks transcription of the operon. This chain is Biofilm growth-associated repressor (bigR), found in Agrobacterium fabrum (strain C58 / ATCC 33970) (Agrobacterium tumefaciens (strain C58)).